We begin with the raw amino-acid sequence, 286 residues long: Phosphatidylserine decarboxylase proenzyme (286 aa).

Residues Asp88, His145, and Ser251 each act as charge relay system; for autoendoproteolytic cleavage activity in the active site. The active-site Schiff-base intermediate with substrate; via pyruvic acid; for decarboxylase activity is the Ser251. A Pyruvic acid (Ser); by autocatalysis modification is found at Ser251.

Belongs to the phosphatidylserine decarboxylase family. PSD-B subfamily. Prokaryotic type I sub-subfamily. In terms of assembly, heterodimer of a large membrane-associated beta subunit and a small pyruvoyl-containing alpha subunit. It depends on pyruvate as a cofactor. Post-translationally, is synthesized initially as an inactive proenzyme. Formation of the active enzyme involves a self-maturation process in which the active site pyruvoyl group is generated from an internal serine residue via an autocatalytic post-translational modification. Two non-identical subunits are generated from the proenzyme in this reaction, and the pyruvate is formed at the N-terminus of the alpha chain, which is derived from the carboxyl end of the proenzyme. The autoendoproteolytic cleavage occurs by a canonical serine protease mechanism, in which the side chain hydroxyl group of the serine supplies its oxygen atom to form the C-terminus of the beta chain, while the remainder of the serine residue undergoes an oxidative deamination to produce ammonia and the pyruvoyl prosthetic group on the alpha chain. During this reaction, the Ser that is part of the protease active site of the proenzyme becomes the pyruvoyl prosthetic group, which constitutes an essential element of the active site of the mature decarboxylase.

Its subcellular location is the cell membrane. The catalysed reaction is a 1,2-diacyl-sn-glycero-3-phospho-L-serine + H(+) = a 1,2-diacyl-sn-glycero-3-phosphoethanolamine + CO2. It functions in the pathway phospholipid metabolism; phosphatidylethanolamine biosynthesis; phosphatidylethanolamine from CDP-diacylglycerol: step 2/2. Its function is as follows. Catalyzes the formation of phosphatidylethanolamine (PtdEtn) from phosphatidylserine (PtdSer). This is Phosphatidylserine decarboxylase proenzyme from Verminephrobacter eiseniae (strain EF01-2).